Reading from the N-terminus, the 730-residue chain is ABC transporter G family member 20 (730 aa).

Residues I15–F244 form the ABC transporter domain. Residue G47–T54 coordinates ATP. The segment at V281–E303 is disordered. Residues N282–N298 are compositionally biased toward low complexity. Residues S489–K717 enclose the ABC transmembrane type-2 domain. 5 helical membrane-spanning segments follow: residues F520–I540, F572–Y592, I602–V622, I634–L654, and V692–L712.

This sequence belongs to the ABC transporter superfamily.

Its subcellular location is the membrane. The protein is ABC transporter G family member 20 (abcG20) of Dictyostelium discoideum (Social amoeba).